Consider the following 573-residue polypeptide: DEAD-box ATP-dependent RNA helicase 47B (573 aa).

A Q motif motif is present at residues 131-159; the sequence is KSFEELGLPPLLIDRLNKEGLSTPTEVQS. The Helicase ATP-binding domain maps to 162 to 362; the sequence is IPIISQKHDA…RSWGHDPVLV (201 aa). 175–182 lines the ATP pocket; sequence SYTGSGKT. Positions 293–296 match the DEAD box motif; the sequence is DEVD. The Helicase C-terminal domain occupies 421-565; it reads TLRRCIHALE…PCEFTEGKLL (145 aa).

It belongs to the DEAD box helicase family.

It catalyses the reaction ATP + H2O = ADP + phosphate + H(+). This chain is DEAD-box ATP-dependent RNA helicase 47B, found in Oryza sativa subsp. japonica (Rice).